Consider the following 508-residue polypeptide: Lysine--tRNA ligase (508 aa).

Residues Glu-418 and Glu-425 each coordinate Mg(2+).

The protein belongs to the class-II aminoacyl-tRNA synthetase family. Homodimer. Mg(2+) serves as cofactor.

It is found in the cytoplasm. The catalysed reaction is tRNA(Lys) + L-lysine + ATP = L-lysyl-tRNA(Lys) + AMP + diphosphate. The chain is Lysine--tRNA ligase from Burkholderia vietnamiensis (strain G4 / LMG 22486) (Burkholderia cepacia (strain R1808)).